The primary structure comprises 242 residues: RNA transcription, translation and transport factor protein (242 aa).

The protein belongs to the RTRAF family. In terms of assembly, homodimer. Component of a tRNA-splicing ligase complex.

It localises to the nucleus. The protein resides in the cytoplasm. The protein localises to the cytosol. Its subcellular location is the perinuclear region. It is found in the cytoskeleton. It localises to the microtubule organizing center. The protein resides in the centrosome. RNA-binding protein involved in modulation of mRNA transcription by Polymerase II. Component of the tRNA-splicing ligase complex. This chain is RNA transcription, translation and transport factor protein, found in Danio rerio (Zebrafish).